The chain runs to 454 residues: UPF0210 protein EUBELI_01067 (454 aa).

Belongs to the UPF0210 family. In terms of assembly, homodimer.

The sequence is that of UPF0210 protein EUBELI_01067 from Lachnospira eligens (strain ATCC 27750 / DSM 3376 / VPI C15-48 / C15-B4) (Eubacterium eligens).